The sequence spans 243 residues: UPF0246 protein MGAS9429_Spy1799 (243 aa).

The protein belongs to the UPF0246 family.

This is UPF0246 protein MGAS9429_Spy1799 from Streptococcus pyogenes serotype M12 (strain MGAS9429).